The chain runs to 440 residues: Histidinol dehydrogenase (440 aa).

Residues tyrosine 139, glutamine 201, and asparagine 224 each coordinate NAD(+). Serine 247, glutamine 269, and histidine 272 together coordinate substrate. Residues glutamine 269 and histidine 272 each contribute to the Zn(2+) site. Active-site proton acceptor residues include glutamate 337 and histidine 338. Positions 338, 371, 425, and 430 each coordinate substrate. Aspartate 371 serves as a coordination point for Zn(2+). Histidine 430 contacts Zn(2+).

This sequence belongs to the histidinol dehydrogenase family. Requires Zn(2+) as cofactor.

The enzyme catalyses L-histidinol + 2 NAD(+) + H2O = L-histidine + 2 NADH + 3 H(+). It functions in the pathway amino-acid biosynthesis; L-histidine biosynthesis; L-histidine from 5-phospho-alpha-D-ribose 1-diphosphate: step 9/9. Functionally, catalyzes the sequential NAD-dependent oxidations of L-histidinol to L-histidinaldehyde and then to L-histidine. The protein is Histidinol dehydrogenase of Prochlorococcus marinus (strain MIT 9312).